The following is a 354-amino-acid chain: Chorismate synthase (354 aa).

Position 48 (arginine 48) interacts with NADP(+). Residues 125-127 (RAS), glycine 277, 292-296 (KPIPS), and arginine 318 each bind FMN.

The protein belongs to the chorismate synthase family. Homotetramer. Requires FMNH2 as cofactor.

The enzyme catalyses 5-O-(1-carboxyvinyl)-3-phosphoshikimate = chorismate + phosphate. The protein operates within metabolic intermediate biosynthesis; chorismate biosynthesis; chorismate from D-erythrose 4-phosphate and phosphoenolpyruvate: step 7/7. Catalyzes the anti-1,4-elimination of the C-3 phosphate and the C-6 proR hydrogen from 5-enolpyruvylshikimate-3-phosphate (EPSP) to yield chorismate, which is the branch point compound that serves as the starting substrate for the three terminal pathways of aromatic amino acid biosynthesis. This reaction introduces a second double bond into the aromatic ring system. The chain is Chorismate synthase from Nitratidesulfovibrio vulgaris (strain ATCC 29579 / DSM 644 / CCUG 34227 / NCIMB 8303 / VKM B-1760 / Hildenborough) (Desulfovibrio vulgaris).